The primary structure comprises 568 residues: Oxygen-dependent choline dehydrogenase (568 aa).

8 to 37 (DYIIIGAGSAGNTLAARLTEDAGVTVLLLE) is an FAD binding site. Residue His477 is the Proton acceptor of the active site.

The protein belongs to the GMC oxidoreductase family. FAD serves as cofactor.

The catalysed reaction is choline + A = betaine aldehyde + AH2. It catalyses the reaction betaine aldehyde + NAD(+) + H2O = glycine betaine + NADH + 2 H(+). It functions in the pathway amine and polyamine biosynthesis; betaine biosynthesis via choline pathway; betaine aldehyde from choline (cytochrome c reductase route): step 1/1. Its function is as follows. Involved in the biosynthesis of the osmoprotectant glycine betaine. Catalyzes the oxidation of choline to betaine aldehyde and betaine aldehyde to glycine betaine at the same rate. The sequence is that of Oxygen-dependent choline dehydrogenase from Pseudomonas savastanoi pv. phaseolicola (strain 1448A / Race 6) (Pseudomonas syringae pv. phaseolicola (strain 1448A / Race 6)).